The chain runs to 71 residues: Small ribosomal subunit protein bS21 (71 aa).

This sequence belongs to the bacterial ribosomal protein bS21 family.

The chain is Small ribosomal subunit protein bS21 from Alcanivorax borkumensis (strain ATCC 700651 / DSM 11573 / NCIMB 13689 / SK2).